The primary structure comprises 53 residues: Large ribosomal subunit protein bL32c (53 aa).

The protein belongs to the bacterial ribosomal protein bL32 family.

It is found in the plastid. The protein resides in the chloroplast. The polypeptide is Large ribosomal subunit protein bL32c (Coffea arabica (Arabian coffee)).